We begin with the raw amino-acid sequence, 121 residues long: Large ribosomal subunit protein bL12 (121 aa).

It belongs to the bacterial ribosomal protein bL12 family. In terms of assembly, homodimer. Part of the ribosomal stalk of the 50S ribosomal subunit. Forms a multimeric L10(L12)X complex, where L10 forms an elongated spine to which 2 to 4 L12 dimers bind in a sequential fashion. Binds GTP-bound translation factors.

Functionally, forms part of the ribosomal stalk which helps the ribosome interact with GTP-bound translation factors. Is thus essential for accurate translation. The sequence is that of Large ribosomal subunit protein bL12 from Clostridium perfringens (strain 13 / Type A).